Consider the following 556-residue polypeptide: Genetic interactor of prohibitins 3, mitochondrial (556 aa).

Residues 1–21 (MLNLCHALRGVRQFSCSVIVK) constitute a mitochondrion transit peptide. A CP-type G domain is found at 113-305 (ESTLNDILNY…LFDLPGYSTS (193 aa)).

Belongs to the TRAFAC class YlqF/YawG GTPase family. GEP3 subfamily.

The protein localises to the mitochondrion. In terms of biological role, interacts genetically with prohibitins and thus may be involved in the mitochondrial lipid metabolism. The chain is Genetic interactor of prohibitins 3, mitochondrial (GEP3) from Saccharomyces cerevisiae (strain Zymaflore VL3) (Baker's yeast).